We begin with the raw amino-acid sequence, 357 residues long: Glycerol-3-phosphate dehydrogenase [NAD(P)+] (357 aa).

S12, W13, H33, and K115 together coordinate NADPH. Positions 115, 149, and 151 each coordinate sn-glycerol 3-phosphate. G153 serves as a coordination point for NADPH. Sn-glycerol 3-phosphate contacts are provided by K204, D263, R274, and N275. K204 functions as the Proton acceptor in the catalytic mechanism. An NADPH-binding site is contributed by R274. NADPH-binding residues include L307 and E309.

The protein belongs to the NAD-dependent glycerol-3-phosphate dehydrogenase family.

The protein localises to the cytoplasm. It catalyses the reaction sn-glycerol 3-phosphate + NAD(+) = dihydroxyacetone phosphate + NADH + H(+). The enzyme catalyses sn-glycerol 3-phosphate + NADP(+) = dihydroxyacetone phosphate + NADPH + H(+). It functions in the pathway membrane lipid metabolism; glycerophospholipid metabolism. Its function is as follows. Catalyzes the reduction of the glycolytic intermediate dihydroxyacetone phosphate (DHAP) to sn-glycerol 3-phosphate (G3P), the key precursor for phospholipid synthesis. The protein is Glycerol-3-phosphate dehydrogenase [NAD(P)+] of Treponema denticola (strain ATCC 35405 / DSM 14222 / CIP 103919 / JCM 8153 / KCTC 15104).